Consider the following 145-residue polypeptide: 3-hydroxyacyl-[acyl-carrier-protein] dehydratase FabZ (145 aa).

H47 is a catalytic residue.

Belongs to the thioester dehydratase family. FabZ subfamily.

Its subcellular location is the cytoplasm. The enzyme catalyses a (3R)-hydroxyacyl-[ACP] = a (2E)-enoyl-[ACP] + H2O. In terms of biological role, involved in unsaturated fatty acids biosynthesis. Catalyzes the dehydration of short chain beta-hydroxyacyl-ACPs and long chain saturated and unsaturated beta-hydroxyacyl-ACPs. The sequence is that of 3-hydroxyacyl-[acyl-carrier-protein] dehydratase FabZ from Acidovorax sp. (strain JS42).